Here is a 341-residue protein sequence, read N- to C-terminus: 4-(gamma-L-glutamylamino)butanoyl-[BtrI acyl-carrier protein] monooxygenase BtrO (341 aa).

It belongs to the bacterial luciferase oxidoreductase family.

The catalysed reaction is 4-(gamma-L-glutamylamino)butanoyl-[BtrI ACP] + FMNH2 + O2 = 4-(gamma-L-glutamylamino)-(2S)-2-hydroxybutanoyl-[BtrI ACP] + FMN + H2O + H(+). Its pathway is antibiotic biosynthesis; butirosin biosynthesis. Functionally, monooxygenase component of a two-component system involved in the biosynthesis of the side chain of the aminoglycoside antibiotics in the biosynthetic pathway of butirosin. Together with BtrV, mediates hydroxylation of gamma-L-Glu-GABA-S-BtrI. Not able to hydroxylate free substrates, activation by the acyl-carrier protein is mandatory. Octanoyl-S-[BtrI acyl-carrier protein] is also accepted as substrate. This Niallia circulans (Bacillus circulans) protein is 4-(gamma-L-glutamylamino)butanoyl-[BtrI acyl-carrier protein] monooxygenase BtrO (btrO).